We begin with the raw amino-acid sequence, 59 residues long: MKKMKVTQFKSGAHRLKSHKASLKGLGLRRINHTVIVEDTPSTRGMVNRVNYLVKVEEA.

Belongs to the universal ribosomal protein uL30 family. In terms of assembly, part of the 50S ribosomal subunit.

In Psychrobacter arcticus (strain DSM 17307 / VKM B-2377 / 273-4), this protein is Large ribosomal subunit protein uL30.